The following is a 423-amino-acid chain: Peroxisomal membrane protein PMP47A (423 aa).

3 Solcar repeats span residues 6–120 (YDDL…TGKT), 142–230 (LSVW…LKSF), and 239–373 (ITPV…LLIL). The chain crosses the membrane as a helical span at residues 12–32 (AFAGAGGGLLSMTLTYPLVTL). Positions 43-53 (KKDQEKEKENS) are enriched in basic and acidic residues. Residues 43-70 (KKDQEKEKENSNEDGSLSPKSSNTSDVS) are disordered. Residues 55–70 (EDGSLSPKSSNTSDVS) are compositionally biased toward polar residues. 4 consecutive transmembrane segments (helical) span residues 98-118 (SALF…ELTG), 148-168 (MAAG…IWVA), 204-224 (FTGI…YTIF), and 245-265 (LLLG…YITL). Positions 278 to 308 (SEDVEKERTDSVQSLPEDGSDEDNLKENSAK) are disordered. A helical transmembrane segment spans residues 353 to 373 (LLQSILNAAFLFYFKEELLIL).

Belongs to the mitochondrial carrier (TC 2.A.29) family.

Its subcellular location is the peroxisome membrane. May have transport activity. The chain is Peroxisomal membrane protein PMP47A (PMP47A) from Candida boidinii (Yeast).